Reading from the N-terminus, the 244-residue chain is Small ribosomal subunit protein uS3 (244 aa).

Residues 39–107 form the KH type-2 domain; the sequence is IRELIKKESF…KLIINVEEIK (69 aa). A disordered region spans residues 216-244; that stretch reads LPVYKNKKNDKNKKRRNNNRKGKSQAAKN. Positions 220-238 are enriched in basic residues; the sequence is KNKKNDKNKKRRNNNRKGK.

Belongs to the universal ribosomal protein uS3 family. In terms of assembly, part of the 30S ribosomal subunit. Forms a tight complex with proteins S10 and S14.

Binds the lower part of the 30S subunit head. Binds mRNA in the 70S ribosome, positioning it for translation. In Finegoldia magna (strain ATCC 29328 / DSM 20472 / WAL 2508) (Peptostreptococcus magnus), this protein is Small ribosomal subunit protein uS3.